Consider the following 366-residue polypeptide: Probable cyclin-dependent kinase 10 (366 aa).

Positions 7–293 (FEKLDSIGEG…ASDAIKHPFF (287 aa)) constitute a Protein kinase domain. ATP is bound by residues 13-21 (IGEGTYGIV) and Lys36. Asp132 serves as the catalytic Proton acceptor. Positions 315-358 (FKNQNKKQNNNFNNFVQNNQTNQNNQTNQNNQTNQNNKTSQNNN) are enriched in low complexity. The disordered stretch occupies residues 315–366 (FKNQNKKQNNNFNNFVQNNQTNQNNQTNQNNQTNQNNKTSQNNNMDSYKYSK).

It belongs to the protein kinase superfamily. CMGC Ser/Thr protein kinase family. CDC2/CDKX subfamily.

The enzyme catalyses L-seryl-[protein] + ATP = O-phospho-L-seryl-[protein] + ADP + H(+). The catalysed reaction is L-threonyl-[protein] + ATP = O-phospho-L-threonyl-[protein] + ADP + H(+). The polypeptide is Probable cyclin-dependent kinase 10 (cdk10) (Dictyostelium discoideum (Social amoeba)).